Consider the following 747-residue polypeptide: DNA ligase (747 aa).

Residues 113–117, 161–162, and E190 contribute to the NAD(+) site; these read DRAYD and SI. The active-site N6-AMP-lysine intermediate is K192. 4 residues coordinate NAD(+): R213, E249, K364, and K388. Zn(2+) contacts are provided by C479, C482, C495, and C501. A BRCT domain is found at 660–747; that stretch reads TTNAPLSDLT…EHDDTLTWPP (88 aa).

The protein belongs to the NAD-dependent DNA ligase family. LigA subfamily. Mg(2+) serves as cofactor. Requires Mn(2+) as cofactor.

It catalyses the reaction NAD(+) + (deoxyribonucleotide)n-3'-hydroxyl + 5'-phospho-(deoxyribonucleotide)m = (deoxyribonucleotide)n+m + AMP + beta-nicotinamide D-nucleotide.. In terms of biological role, DNA ligase that catalyzes the formation of phosphodiester linkages between 5'-phosphoryl and 3'-hydroxyl groups in double-stranded DNA using NAD as a coenzyme and as the energy source for the reaction. It is essential for DNA replication and repair of damaged DNA. The polypeptide is DNA ligase (Haloquadratum walsbyi (strain DSM 16790 / HBSQ001)).